A 245-amino-acid chain; its full sequence is tRNA1(Val) (adenine(37)-N6)-methyltransferase (245 aa).

Belongs to the methyltransferase superfamily. tRNA (adenine-N(6)-)-methyltransferase family.

The protein resides in the cytoplasm. The enzyme catalyses adenosine(37) in tRNA1(Val) + S-adenosyl-L-methionine = N(6)-methyladenosine(37) in tRNA1(Val) + S-adenosyl-L-homocysteine + H(+). In terms of biological role, specifically methylates the adenine in position 37 of tRNA(1)(Val) (anticodon cmo5UAC). The protein is tRNA1(Val) (adenine(37)-N6)-methyltransferase of Escherichia coli O6:K15:H31 (strain 536 / UPEC).